Consider the following 67-residue polypeptide: Large ribosomal subunit protein bL35 (67 aa).

It belongs to the bacterial ribosomal protein bL35 family.

The sequence is that of Large ribosomal subunit protein bL35 from Sphingopyxis alaskensis (strain DSM 13593 / LMG 18877 / RB2256) (Sphingomonas alaskensis).